Here is a 225-residue protein sequence, read N- to C-terminus: Urease accessory protein UreG 2 (225 aa).

31-38 (GPVGSGKT) is a GTP binding site.

Belongs to the SIMIBI class G3E GTPase family. UreG subfamily. Homodimer. UreD, UreF and UreG form a complex that acts as a GTP-hydrolysis-dependent molecular chaperone, activating the urease apoprotein by helping to assemble the nickel containing metallocenter of UreC. The UreE protein probably delivers the nickel.

The protein localises to the cytoplasm. Facilitates the functional incorporation of the urease nickel metallocenter. This process requires GTP hydrolysis, probably effectuated by UreG. The protein is Urease accessory protein UreG 2 of Streptomyces griseus subsp. griseus (strain JCM 4626 / CBS 651.72 / NBRC 13350 / KCC S-0626 / ISP 5235).